We begin with the raw amino-acid sequence, 106 residues long: Photosystem II 5 kDa protein, chloroplastic (106 aa).

A chloroplast-targeting transit peptide spans 1-76; the sequence is MASITMMSSF…ACSVAKTAMA (76 aa). A disulfide bond links Cys-95 and Cys-104.

Post-translationally, disulfide bond. In terms of tissue distribution, expressed in midvein, lamina and periphery of leaves (at protein level).

It is found in the plastid. Its subcellular location is the chloroplast thylakoid membrane. In terms of biological role, may be a component of the oxygen-evolving complex. The polypeptide is Photosystem II 5 kDa protein, chloroplastic (Petunia hybrida (Petunia)).